Reading from the N-terminus, the 155-residue chain is Ribosomal RNA large subunit methyltransferase H (155 aa).

S-adenosyl-L-methionine is bound by residues Leu72, Gly103, and Leu122–Leu127.

It belongs to the RNA methyltransferase RlmH family. Homodimer.

It is found in the cytoplasm. It carries out the reaction pseudouridine(1915) in 23S rRNA + S-adenosyl-L-methionine = N(3)-methylpseudouridine(1915) in 23S rRNA + S-adenosyl-L-homocysteine + H(+). In terms of biological role, specifically methylates the pseudouridine at position 1915 (m3Psi1915) in 23S rRNA. The polypeptide is Ribosomal RNA large subunit methyltransferase H (Cronobacter sakazakii (strain ATCC BAA-894) (Enterobacter sakazakii)).